Here is a 376-residue protein sequence, read N- to C-terminus: Chaperone protein DnaJ (376 aa).

Residues 5-70 form the J domain; it reads DYYEVLGVAR…NKRRAYDAHG (66 aa). A CR-type zinc finger spans residues 132 to 209; the sequence is GIERRIEIPT…CHGAGRVEED (78 aa). Zn(2+)-binding residues include Cys145, Cys148, Cys161, Cys164, Cys183, Cys186, Cys197, and Cys200. CXXCXGXG motif repeat units lie at residues 145–152, 161–168, 183–190, and 197–204; these read CEPCHGSG, CATCHGRG, CPHCDGRG, and CKTCHGAG.

Belongs to the DnaJ family. In terms of assembly, homodimer. Zn(2+) serves as cofactor.

Its subcellular location is the cytoplasm. Functionally, participates actively in the response to hyperosmotic and heat shock by preventing the aggregation of stress-denatured proteins and by disaggregating proteins, also in an autonomous, DnaK-independent fashion. Unfolded proteins bind initially to DnaJ; upon interaction with the DnaJ-bound protein, DnaK hydrolyzes its bound ATP, resulting in the formation of a stable complex. GrpE releases ADP from DnaK; ATP binding to DnaK triggers the release of the substrate protein, thus completing the reaction cycle. Several rounds of ATP-dependent interactions between DnaJ, DnaK and GrpE are required for fully efficient folding. Also involved, together with DnaK and GrpE, in the DNA replication of plasmids through activation of initiation proteins. This Xanthomonas campestris pv. campestris (strain 8004) protein is Chaperone protein DnaJ.